A 467-amino-acid polypeptide reads, in one-letter code: Glutamate--tRNA ligase (467 aa).

A 'HIGH' region motif is present at residues 9-19; sequence PSPTGYLHIGG. Positions 237 to 241 match the 'KMSKS' region motif; it reads KLSKR. Lys-240 provides a ligand contact to ATP.

Belongs to the class-I aminoacyl-tRNA synthetase family. Glutamate--tRNA ligase type 1 subfamily. In terms of assembly, monomer.

Its subcellular location is the cytoplasm. The enzyme catalyses tRNA(Glu) + L-glutamate + ATP = L-glutamyl-tRNA(Glu) + AMP + diphosphate. Catalyzes the attachment of glutamate to tRNA(Glu) in a two-step reaction: glutamate is first activated by ATP to form Glu-AMP and then transferred to the acceptor end of tRNA(Glu). The polypeptide is Glutamate--tRNA ligase (Xanthomonas axonopodis pv. citri (strain 306)).